Reading from the N-terminus, the 269-residue chain is Imidazoleglycerol-phosphate dehydratase 3, chloroplastic (269 aa).

A chloroplast-targeting transit peptide spans 1-51 (MTTAPVVSPSLSRLHSAPASPFPKAPVGSGAGVAFPARPYGPSLRLRSAVM). Residues glutamate 83, 109 to 117 (HMLDQLASH), 135 to 139 (HHSNE), arginine 161, and arginine 183 each bind substrate. Mn(2+) is bound by residues histidine 109, histidine 135, histidine 136, and glutamate 139. Residues histidine 207, histidine 231, histidine 232, and glutamate 235 each coordinate Mn(2+). Substrate-binding positions include 231-239 (HHIIEATFK) and 261-263 (SSK).

The protein belongs to the imidazoleglycerol-phosphate dehydratase family. The cofactor is Mn(2+).

Its subcellular location is the plastid. The protein resides in the chloroplast. It carries out the reaction D-erythro-1-(imidazol-4-yl)glycerol 3-phosphate = 3-(imidazol-4-yl)-2-oxopropyl phosphate + H2O. It functions in the pathway amino-acid biosynthesis; L-histidine biosynthesis; L-histidine from 5-phospho-alpha-D-ribose 1-diphosphate: step 6/9. This is Imidazoleglycerol-phosphate dehydratase 3, chloroplastic from Triticum aestivum (Wheat).